A 447-amino-acid polypeptide reads, in one-letter code: Cysteine--tRNA ligase (447 aa).

Cys28 serves as a coordination point for Zn(2+). A 'HIGH' region motif is present at residues 30–40 (PTVYNYIHIGN). Residues Cys211, His236, and Glu240 each coordinate Zn(2+). The 'KMSKS' region signature appears at 268–272 (KMSKS). Residue Lys271 coordinates ATP.

It belongs to the class-I aminoacyl-tRNA synthetase family. As to quaternary structure, monomer. Zn(2+) serves as cofactor.

The protein resides in the cytoplasm. The catalysed reaction is tRNA(Cys) + L-cysteine + ATP = L-cysteinyl-tRNA(Cys) + AMP + diphosphate. The chain is Cysteine--tRNA ligase from Streptococcus pyogenes serotype M28 (strain MGAS6180).